The primary structure comprises 459 residues: MPQYQELPCGGQVLDIDTALKDGILGGGPELGDAAAGDGGKQPVELRKMMDELDAAGDGGGDEAVPAVFICPISLEPMVDPVTLCTGQTYESANISRWLALGHRTCPTTMQELWDVTPIPNTTLRQLIAAWFSRRYTRFKKRSADFHGRAAELVHALRGTAVPKRQPLKGQARVAALRELRSLAAAHQSVTKAIAEAGGVGLLTSLLGPFTSHAVGSEAVAILVSGVPLDADAKAALMQPAKVSLLVDMLNEGAVDTKINCVRLIRILMEEKGFRPDTVASLSLLVGVMRLVRDKRHPDGVAAGLELLNSICAVHKPARSLIVSIGAVPQLVELLPELPTECVEPALDILDALAAVPEGRIALKDCPRTITNAVRLLMRVSEACTRRALSMLWVVCRMAPEECAPAALDAGLGAKLLLVIQSGCGPELKQQASELLKLCTMNCTSTVFISKCKLTKTIQ.

A U-box domain is found at 64 to 138; the sequence is AVPAVFICPI…AAWFSRRYTR (75 aa). ARM repeat units follow at residues 188–229 and 231–270; these read QSVT…GVPL and ADAK…ILME.

As to quaternary structure, interacts with GPA1. In terms of tissue distribution, expressed highly in panicles at flowering time, at moderate levels in vegetative shoot apices, leaf sheaths, leaf blades, and elongating internodes, and at low levels in roots.

The protein resides in the cell membrane. The catalysed reaction is S-ubiquitinyl-[E2 ubiquitin-conjugating enzyme]-L-cysteine + [acceptor protein]-L-lysine = [E2 ubiquitin-conjugating enzyme]-L-cysteine + N(6)-ubiquitinyl-[acceptor protein]-L-lysine.. It functions in the pathway protein modification; protein ubiquitination. Its function is as follows. E3 ubiquitin ligase that may function as positive regulator of brassinosteroid (BR) signaling. Possesses E3 ubiquitin ligase in vitro. Acts together with the heterotrimeric G alpha subunit GPA1 at the plasma membrane to mediate a BR signaling pathway that affects plant growth and development. Does not seem to be involved in gibberellin or cytokinin responses. The chain is U-box domain-containing protein 75 from Oryza sativa subsp. japonica (Rice).